The sequence spans 730 residues: Catalase-peroxidase 1 (730 aa).

The disordered stretch occupies residues Met1 to Gln24. Positions Trp95–Tyr218 form a cross-link, tryptophyl-tyrosyl-methioninium (Trp-Tyr) (with M-244). The Proton acceptor role is filled by His96. The segment at residues Tyr218–Met244 is a cross-link (tryptophyl-tyrosyl-methioninium (Tyr-Met) (with W-95)). His259 provides a ligand contact to heme b.

This sequence belongs to the peroxidase family. Peroxidase/catalase subfamily. Homodimer or homotetramer. The cofactor is heme b. In terms of processing, formation of the three residue Trp-Tyr-Met cross-link is important for the catalase, but not the peroxidase activity of the enzyme.

It carries out the reaction H2O2 + AH2 = A + 2 H2O. The catalysed reaction is 2 H2O2 = O2 + 2 H2O. Its function is as follows. Bifunctional enzyme with both catalase and broad-spectrum peroxidase activity. In Alkaliphilus metalliredigens (strain QYMF), this protein is Catalase-peroxidase 1.